The sequence spans 531 residues: Doublesex- and mab-3-related transcription factor A2 (531 aa).

The DM DNA-binding region spans 69–116; the sequence is CARCRNHGVVSALKGHKRYCRWKDCLCAKCTLIAERQRVMAAQVALRR. The disordered stretch occupies residues 197 to 312; sequence LQAGRPDSPQ…GGPGPRQRTP (116 aa). The segment covering 274–285 has biased composition (low complexity); sequence PGSSSPLGSESG. Residues 310–345 form the DMA domain; that stretch reads RTPLDILTRVFPGHRRGVLELVLQGCGGDVVQAIEQ.

This sequence belongs to the DMRT family. As to expression, expressed in adult brain and testis, as well as in embryonic ovary, kidney, heart, lung, stomach and brain.

Its subcellular location is the nucleus. In terms of biological role, may be involved in sexual development. The sequence is that of Doublesex- and mab-3-related transcription factor A2 (Dmrta2) from Mus musculus (Mouse).